Consider the following 417-residue polypeptide: Serpin H1 (417 aa).

A signal peptide spans 1–18 (MRSLLLLSAFCLLEAALA). Lysine 94 is subject to N6-succinyllysine. Residues asparagine 120 and asparagine 125 are each glycosylated (N-linked (GlcNAc...) asparagine). Serine 141 bears the Phosphoserine mark. N6-acetyllysine is present on lysine 206. N6-succinyllysine is present on lysine 295. Lysine 318 carries the post-translational modification N6-acetyllysine. The Prevents secretion from ER motif lies at 414 to 417 (RDEL).

It belongs to the serpin family.

The protein resides in the endoplasmic reticulum lumen. Its function is as follows. Binds specifically to collagen. Could be involved as a chaperone in the biosynthetic pathway of collagen. This is Serpin H1 (SERPINH1) from Pongo abelii (Sumatran orangutan).